Here is a 651-residue protein sequence, read N- to C-terminus: MARGSAVAWAALGPLLWGCALGLQGGMLYPQESPSRECKELDGLWSFRADFSDNRRRGFEEQWYRRPLWESGPTVDMPVPSSFNDISQDWRLRHFVGWVWYEREVILPERWTQDLRTRVVLRIGSAHSYAIVWVNGVDTLEHEGGYLPFEADISNLVQVGPLPSRLRITIAINNTLTPTTLPPGTIQYLTDTSKYPKGYFVQNTYFDFFNYAGLQRSVLLYTTPTTYIDDITVTTSVEQDSGLVNYQISVKGSNLFKLEVRLLDAENKVVANGTGTQGQLKVPGVSLWWPYLMHERPAYLYSLEVQLTAQTSLGPVSDFYTLPVGIRTVAVTKSQFLINGKPFYFHGVNKHEDADIRGKGFDWPLLVKDFNLLRWLGANAFRTSHYPYAEEVMQMCDRYGIVVIDECPGVGLALPQFFNNVSLHHHMQVMEEVVRRDKNHPAVVMWSVANEPASHLESAGYYLKMVIAHTKSLDPSRPVTFVSNSNYAADKGAPYVDVICLNSYYSWYHDYGHLELIQLQLATQFENWYKKYQKPIIQSEYGAETIAGFHQDPPLMFTEEYQKSLLEQYHLGLDQKRRKYVVGELIWNFADFMTEQSPTRVLGNKKGIFTRQRQPKSAAFLLRERYWKIANETRYPHSVAKSQCLENSLFT.

Positions 1–22 are cleaved as a signal peptide; it reads MARGSAVAWAALGPLLWGCALG. 3 N-linked (GlcNAc...) asparagine glycosylation sites follow: N173, N272, and N420. E451 functions as the Proton donor in the catalytic mechanism. N-linked (GlcNAc...) asparagine glycosylation is present at N631.

This sequence belongs to the glycosyl hydrolase 2 family. In terms of assembly, homotetramer. N-linked glycosylated with 3 to 4 oligosaccharide chains.

It localises to the lysosome. It catalyses the reaction a beta-D-glucuronoside + H2O = D-glucuronate + an alcohol. Its activity is regulated as follows. Inhibited by L-aspartic acid. In terms of biological role, plays an important role in the degradation of dermatan and keratan sulfates. The sequence is that of Beta-glucuronidase (GUSB) from Homo sapiens (Human).